Reading from the N-terminus, the 301-residue chain is Large ribosomal subunit protein uL4 (301 aa).

The segment at 1–223 (MNETKTIDVL…TQALSAQPEV (223 aa)) is large ribosomal subunit protein uL4. The segment at 49–105 (QGTHATKTRGQVSGGGKKPWRQKGTGRARQGSTRAPQWVGGGTVHGPQPRSYAQRTP) is disordered. The unknown stretch occupies residues 224-301 (PETNVADQHP…KSDSEKEDAK (78 aa)).

The protein belongs to the universal ribosomal protein uL4 family. As to quaternary structure, part of the 50S ribosomal subunit.

Its function is as follows. One of the primary rRNA binding proteins, this protein initially binds near the 5'-end of the 23S rRNA. It is important during the early stages of 50S assembly. It makes multiple contacts with different domains of the 23S rRNA in the assembled 50S subunit and ribosome. In terms of biological role, forms part of the polypeptide exit tunnel. This chain is Large ribosomal subunit protein uL4, found in Cutibacterium acnes (strain DSM 16379 / KPA171202) (Propionibacterium acnes).